The sequence spans 570 residues: MAVTLPRPAYAGMFGPTTGDKVRLADTELFIEIERDFTLYGEEVKFGGGKVIRDGMGQGQASKAEGAADTIITNAVIIDHWGIVKADVGLRDGRIIGIGKAGNPDVQPGIDLIIGPGTEIIAGEGRILTAGGFDSHIHFICPQQIEEALASGMTTMLGGGTGPATGTFATTCTPGPWHIARMIEASDGFAMNLGFAGKGNASRSEGLVEQIEAGACALKLHEDWGTTPAAIDCCLSVADDHDIQVMIHTDTLNESGFVEDTIRAFKGRTIHAFHTEGAGGGHAPDIMKVAGLPNVLPSSTNPTRPFTVNTLDEHLDMLMVCHHLDPSIAEDLAFAESRIRKETIAAEDILHDLGALSMMSSDSQAMGRIGEVITRTWQTADKMKRQRGPLPEDKSNNDNFRVRRYIAKYTINPAITHGVSRHIGSIEPGKLADLVLWTPAFFGVKPDLVIKGGMIAYAMMGDPNASIPTPQPVHGRPMFGSFGGARTGTSLTFTSKTALAHGLAQKLKISRKLVPVENTRGNLRKTSLILNGAMPHIEIDPETYVVKADGMVLTCEPARSLPMAQRYFLF.

One can recognise a Urease domain in the interval Gly-131–Phe-570. His-136, His-138, and Lys-219 together coordinate Ni(2+). Position 219 is an N6-carboxylysine (Lys-219). A substrate-binding site is contributed by His-221. Residues His-248 and His-274 each coordinate Ni(2+). Catalysis depends on His-322, which acts as the Proton donor. Asp-362 contacts Ni(2+).

The protein belongs to the metallo-dependent hydrolases superfamily. Urease alpha subunit family. Heterotrimer of UreA (gamma), UreB (beta) and UreC (alpha) subunits. Three heterotrimers associate to form the active enzyme. Ni cation serves as cofactor. Carboxylation allows a single lysine to coordinate two nickel ions.

It is found in the cytoplasm. It carries out the reaction urea + 2 H2O + H(+) = hydrogencarbonate + 2 NH4(+). It functions in the pathway nitrogen metabolism; urea degradation; CO(2) and NH(3) from urea (urease route): step 1/1. The chain is Urease subunit alpha from Beijerinckia indica subsp. indica (strain ATCC 9039 / DSM 1715 / NCIMB 8712).